A 536-amino-acid polypeptide reads, in one-letter code: Multicopper oxidase terE (536 aa).

The segment at 1–21 is disordered; it reads MHWHGLSQSTAPFSDGSPQAS. Plastocyanin-like domains lie at 1–67, 79–238, and 354–488; these read MHWH…VEEK, ERIL…LSYN, and TVQK…VWMM. The Cu cation site is built by H2, H4, H48, and H50. H397 contacts Cu cation.

The protein belongs to the multicopper oxidase family.

It participates in secondary metabolite biosynthesis. In terms of biological role, multicopper oxidase; part of the gene cluster that mediates the biosynthesis of terrein, a fungal metabolite with ecological, antimicrobial, antiproliferative, and antioxidative activities. The first step in the pathway is performed by the polyketide synthase terA that produces 4-hydroxy-6-methylpyranon (4-HMP), orsellinic acid (OA), and 2,3-dehydro-6-hydroxymellein (2,3-dehydro-6-HM) by condensing acetyl-CoA with two, three, or four malonyl-CoA units, respectively. 4-HMP and OA are not pathway intermediates, but are rather shunt or side products. 2,3-dehydro-6-HM is further converted to 6-hydroxymellein (6-HM) by the 6-hydroxymellein synthase terB. The monooxygenases terC and terD, the multicopper oxidase terE and the Kelch-like protein terF are then involved in the transformation of 6-HM to terrein. Even if they are co-regulated with the other terrein cluster genes, terH and terI seem to be dispensable for terrein production; whereas one or both of the 2 transporters terG and terJ are probably required for efficient secretion of metabolites. The protein is Multicopper oxidase terE of Aspergillus terreus (strain NIH 2624 / FGSC A1156).